The sequence spans 182 residues: ADP-ribosylation factor-like protein 3 (182 aa).

Gly2 carries the N-myristoyl glycine lipid modification. Ser5 carries the post-translational modification Phosphoserine. GTP is bound by residues 24-31 (GLDNAGKT), Thr48, 67-71 (DIGGQ), Gly70, 126-129 (NKQD), and 159-161 (SAL). 2 residues coordinate Mg(2+): Thr31 and Thr48.

The protein belongs to the small GTPase superfamily. Arf family. Found in a complex with ARL3, RP2 and UNC119 (or UNC119B); RP2 induces hydrolysis of GTP ARL3 in the complex, leading to the release of UNC119 (or UNC119B). Interacts with RP2; interaction is direct and stimulated with the activated GTP-bound form of ARL3. Interacts with SYS1. The GTP-bound form interacts with ARL2BP and PDE6D. Microtubule-associated protein. May interact with GOLGA4. Interacts with GGA1; the interaction recruits PKD1:PKD2 complex to trans-Golgi network and is required for ciliary targeting of PKD1:PKD2 complex. Interacts with DNAAF9. As to expression, expressed in the retina. Strongly expressed in connecting cilium, the myoid region of the inner segments (IS) and in cone photoreceptors (at protein level).

It localises to the golgi apparatus membrane. The protein resides in the cytoplasm. It is found in the cytoskeleton. Its subcellular location is the spindle. The protein localises to the nucleus. It localises to the microtubule organizing center. The protein resides in the centrosome. It is found in the cell projection. Its subcellular location is the cilium. Small GTP-binding protein which cycles between an inactive GDP-bound and an active GTP-bound form, and the rate of cycling is regulated by guanine nucleotide exchange factors (GEF) and GTPase-activating proteins (GAP). Required for normal cytokinesis and cilia signaling. Requires assistance from GTPase-activating proteins (GAPs) like RP2 and PDE6D, in order to cycle between inactive GDP-bound and active GTP-bound forms. Required for targeting proteins to the cilium, including myristoylated NPHP3 and prenylated INPP5E. Targets NPHP3 to the ciliary membrane by releasing myristoylated NPHP3 from UNC119B cargo adapter into the cilium. Required for PKD1:PKD2 complex targeting from the trans-Golgi network to the cilium. The protein is ADP-ribosylation factor-like protein 3 (ARL3) of Homo sapiens (Human).